We begin with the raw amino-acid sequence, 527 residues long: Peptide chain release factor 3 (527 aa).

In terms of domain architecture, tr-type G spans 9 to 278; sequence NKRRTFAIIS…GLTQWAPKPQ (270 aa). Residues 18–25, 86–90, and 140–143 each bind GTP; these read SHPDAGKT, DTPGH, and NKLD.

This sequence belongs to the TRAFAC class translation factor GTPase superfamily. Classic translation factor GTPase family. PrfC subfamily.

It is found in the cytoplasm. Its function is as follows. Increases the formation of ribosomal termination complexes and stimulates activities of RF-1 and RF-2. It binds guanine nucleotides and has strong preference for UGA stop codons. It may interact directly with the ribosome. The stimulation of RF-1 and RF-2 is significantly reduced by GTP and GDP, but not by GMP. The chain is Peptide chain release factor 3 (prfC) from Haemophilus influenzae (strain ATCC 51907 / DSM 11121 / KW20 / Rd).